A 64-amino-acid chain; its full sequence is Large ribosomal subunit protein bL33 (64 aa).

Composition is skewed to basic and acidic residues over residues 16 to 25 and 33 to 42; these read EARTSSDPKR and TTEKNRRNTT. The tract at residues 16–42 is disordered; the sequence is EARTSSDPKRSNGVSRYTTEKNRRNTT.

It belongs to the bacterial ribosomal protein bL33 family.

This Prochlorococcus marinus (strain MIT 9301) protein is Large ribosomal subunit protein bL33.